The sequence spans 438 residues: 3-phosphoshikimate 1-carboxyvinyltransferase (438 aa).

3-phosphoshikimate contacts are provided by Lys-26, Ser-27, and Arg-31. Position 26 (Lys-26) interacts with phosphoenolpyruvate. The phosphoenolpyruvate site is built by Gly-99 and Arg-127. Residues Ser-170, Ser-171, Gln-172, Ser-199, Glu-314, and His-343 each coordinate 3-phosphoshikimate. Position 172 (Gln-172) interacts with phosphoenolpyruvate. Glu-314 (proton acceptor) is an active-site residue. Phosphoenolpyruvate-binding residues include Arg-347, Arg-388, and Lys-413.

Belongs to the EPSP synthase family. Monomer.

It localises to the cytoplasm. It carries out the reaction 3-phosphoshikimate + phosphoenolpyruvate = 5-O-(1-carboxyvinyl)-3-phosphoshikimate + phosphate. The protein operates within metabolic intermediate biosynthesis; chorismate biosynthesis; chorismate from D-erythrose 4-phosphate and phosphoenolpyruvate: step 6/7. Catalyzes the transfer of the enolpyruvyl moiety of phosphoenolpyruvate (PEP) to the 5-hydroxyl of shikimate-3-phosphate (S3P) to produce enolpyruvyl shikimate-3-phosphate and inorganic phosphate. In Mycobacterium sp. (strain JLS), this protein is 3-phosphoshikimate 1-carboxyvinyltransferase.